The following is a 1096-amino-acid chain: cAMP/cGMP-dependent 3',5'-cAMP/cGMP phosphodiesterase B (1096 aa).

The interval 216 to 248 (SSSKMIINDSPRTQQRNGTTEQQKKQQQQQYLQ) is disordered. Over residues 225–236 (SPRTQQRNGTTE) the composition is skewed to polar residues. H573, H575, and D577 together coordinate a divalent metal cation. Residues 783-930 (VFSK…DLSH) and 946-1070 (ITQH…EDNI) contribute to the a nucleoside 3',5'-cyclic phosphate site.

The protein belongs to the metallo-beta-lactamase superfamily. cNMP phosphodiesterase family. It depends on Mn(2+) as a cofactor. Mg(2+) serves as cofactor. Requires Zn(2+) as cofactor.

It is found in the cytoplasm. Its subcellular location is the cytosol. The enzyme catalyses 3',5'-cyclic AMP + H2O = AMP + H(+). It carries out the reaction 3',5'-cyclic GMP + H2O = GMP + H(+). Functionally, dual specificity cAMP and cGMP phosphodiesterase with marked preference for cyclic AMP, which is activated by cAMP and cGMP. Likely functions as a cAMP-stimulated cAMP-phosphodiesterase which may play a role in regulating the cAMP relay response. This Dictyostelium discoideum (Social amoeba) protein is cAMP/cGMP-dependent 3',5'-cAMP/cGMP phosphodiesterase B (pdeE).